A 262-amino-acid polypeptide reads, in one-letter code: Ornithine carbamoyltransferase (262 aa).

Carbamoyl phosphate contacts are provided by residues 3-7 (STRTR), glutamine 30, arginine 54, and 81-84 (HPTQ). Residues asparagine 114, aspartate 178, and 182–183 (SM) each bind L-ornithine. Carbamoyl phosphate-binding positions include 219 to 222 (HCLP) and threonine 247.

Belongs to the aspartate/ornithine carbamoyltransferase superfamily. OTCase family.

It localises to the cytoplasm. The catalysed reaction is carbamoyl phosphate + L-ornithine = L-citrulline + phosphate + H(+). It participates in amino-acid biosynthesis; L-arginine biosynthesis; L-arginine from L-ornithine and carbamoyl phosphate: step 1/3. Reversibly catalyzes the transfer of the carbamoyl group from carbamoyl phosphate (CP) to the N(epsilon) atom of ornithine (ORN) to produce L-citrulline. The sequence is that of Ornithine carbamoyltransferase (argF) from Neisseria polysaccharea.